A 134-amino-acid polypeptide reads, in one-letter code: Large ribosomal subunit protein eL32 (134 aa).

Belongs to the eukaryotic ribosomal protein eL32 family.

The sequence is that of Large ribosomal subunit protein eL32 (rpl32e) from Picrophilus torridus (strain ATCC 700027 / DSM 9790 / JCM 10055 / NBRC 100828 / KAW 2/3).